The primary structure comprises 210 residues: CLAVATA3/ESR (CLE)-related protein 4D (210 aa).

The N-terminal stretch at 1-21 (MAKNAMLCLLILSVVLALAFA) is a signal peptide. The required for secretion from the host cytoplasm to the host apoplasm stretch occupies residues 21–83 (ATNKKDDEEP…SNQLPNNNWM (63 aa)). N-linked (GlcNAc...) asparagine glycans are attached at residues Asn32 and Asn59. The segment at 115 to 210 (RRKTGTHSQR…APAGPDPIHH (96 aa)) is disordered. Basic and acidic residues-rich tracts occupy residues 125–137 (HHEETTLEQEKRG), 144–158 (PIHHQDTTFEQEKRG), 165–179 (PIHHQDTTLEQEKRV), and 186–200 (PIHHQDTKFEQEKRG). One copy of the A-1 repeat lies at 127 to 135 (EETTLEQEK). The interval 129-198 (TTLEQEKRGA…HQDTKFEQEK (70 aa)) is 4 X approximate repeat A. The stretch at 136–147 (RGAPAGPDPIHH) is one CLE-1 repeat. Residues 136-210 (RGAPAGPDPI…APAGPDPIHH (75 aa)) form a 4 X approximate repeat CLE region. Residues 148 to 156 (QDTTFEQEK) form an A-2 repeat. The stretch at 157–168 (RGAPAGPDPIHH) is one CLE-2 repeat. Residues 169–177 (QDTTLEQEK) form an A-3 repeat. A CLE-3 repeat occupies 178–189 (RVAGAGPDPIHH). The A-4 repeat unit spans residues 190–198 (QDTKFEQEK). The stretch at 199–210 (RGAPAGPDPIHH) is one CLE-4 repeat.

It belongs to the CLV3/ESR signal peptide family. As to expression, highly expressed exclusively within the dorsal esophageal gland cell during syncytium formation in host plants.

The protein resides in the secreted. It is found in the host cytoplasm. Its subcellular location is the host extracellular space. It localises to the extracellular space. The protein localises to the apoplast. Its function is as follows. Mimics host plant CLE extracellular signal peptides that regulate cell fate. May play a role in the differentiation or division of feeding cells (syncytia) induced in plant roots during infection. The polypeptide is CLAVATA3/ESR (CLE)-related protein 4D (CLE-4D) (Globodera rostochiensis (Golden nematode worm)).